Consider the following 197-residue polypeptide: ATP-dependent Clp protease proteolytic subunit (197 aa).

Residue Ser98 is the Nucleophile of the active site. Residue His123 is part of the active site.

The protein belongs to the peptidase S14 family. As to quaternary structure, fourteen ClpP subunits assemble into 2 heptameric rings which stack back to back to give a disk-like structure with a central cavity, resembling the structure of eukaryotic proteasomes.

The protein localises to the cytoplasm. It catalyses the reaction Hydrolysis of proteins to small peptides in the presence of ATP and magnesium. alpha-casein is the usual test substrate. In the absence of ATP, only oligopeptides shorter than five residues are hydrolyzed (such as succinyl-Leu-Tyr-|-NHMec, and Leu-Tyr-Leu-|-Tyr-Trp, in which cleavage of the -Tyr-|-Leu- and -Tyr-|-Trp bonds also occurs).. Its function is as follows. Cleaves peptides in various proteins in a process that requires ATP hydrolysis. Has a chymotrypsin-like activity. Plays a major role in the degradation of misfolded proteins. The chain is ATP-dependent Clp protease proteolytic subunit from Ligilactobacillus salivarius (strain UCC118) (Lactobacillus salivarius).